The chain runs to 335 residues: Flagellar P-ring protein (335 aa).

Positions 1 to 24 are cleaved as a signal peptide; the sequence is MNKITNFLILSAVLFFSLIESANA.

This sequence belongs to the FlgI family. As to quaternary structure, the basal body constitutes a major portion of the flagellar organelle and consists of four rings (L,P,S, and M) mounted on a central rod.

It localises to the periplasm. It is found in the bacterial flagellum basal body. Assembles around the rod to form the L-ring and probably protects the motor/basal body from shearing forces during rotation. This is Flagellar P-ring protein from Bdellovibrio bacteriovorus (strain ATCC 15356 / DSM 50701 / NCIMB 9529 / HD100).